Consider the following 147-residue polypeptide: Hemoglobin subunit beta (147 aa).

The Globin domain occupies 3 to 147 (EWTDFERATI…VVSSLGRQYH (145 aa)). Heme b contacts are provided by His64 and His93.

Belongs to the globin family. Hb 1 is a heterotetramer of two alpha-1 and two beta chains. Hb 2 is a heterotetramer of two alpha-2 and two beta chains. In terms of tissue distribution, red blood cells.

Functionally, involved in oxygen transport from gills to the various peripheral tissues. This Cottoperca gobio (Frogmouth) protein is Hemoglobin subunit beta (hbb).